The sequence spans 141 residues: Neuropeptides CP2 (141 aa).

Residues Met1 to Ala26 form the signal peptide. Residues Lys75–Ala94 are disordered. His140 bears the Histidine amide mark.

As to expression, neurons.

The protein localises to the secreted. Functionally, mediates intrinsic neuromodulation. The protein is Neuropeptides CP2 (CP2PP) of Aplysia californica (California sea hare).